Reading from the N-terminus, the 115-residue chain is NADH-ubiquinone oxidoreductase chain 3 (115 aa).

3 helical membrane passes run 3-23 (LFVA…VAFW), 55-75 (FFLV…LLPL), and 84-104 (LSAM…GLIY).

It belongs to the complex I subunit 3 family. Core subunit of respiratory chain NADH dehydrogenase (Complex I) which is composed of 45 different subunits. Interacts with TMEM186. Interacts with TMEM242.

Its subcellular location is the mitochondrion inner membrane. It catalyses the reaction a ubiquinone + NADH + 5 H(+)(in) = a ubiquinol + NAD(+) + 4 H(+)(out). Functionally, core subunit of the mitochondrial membrane respiratory chain NADH dehydrogenase (Complex I) which catalyzes electron transfer from NADH through the respiratory chain, using ubiquinone as an electron acceptor. Essential for the catalytic activity of complex I. The chain is NADH-ubiquinone oxidoreductase chain 3 from Sigmodon hispidus (Hispid cotton rat).